We begin with the raw amino-acid sequence, 275 residues long: Dermonecrotic toxin SpeSicTox-betaIIA1 (275 aa).

Residue H5 is part of the active site. Mg(2+)-binding residues include E25 and D27. Residue H41 is the Nucleophile of the active site. 2 cysteine pairs are disulfide-bonded: C45–C51 and C47–C190. D85 serves as a coordination point for Mg(2+).

The protein belongs to the arthropod phospholipase D family. Class II subfamily. It depends on Mg(2+) as a cofactor. Expressed by the venom gland.

The protein localises to the secreted. It carries out the reaction an N-(acyl)-sphingosylphosphocholine = an N-(acyl)-sphingosyl-1,3-cyclic phosphate + choline. It catalyses the reaction an N-(acyl)-sphingosylphosphoethanolamine = an N-(acyl)-sphingosyl-1,3-cyclic phosphate + ethanolamine. The catalysed reaction is a 1-acyl-sn-glycero-3-phosphocholine = a 1-acyl-sn-glycero-2,3-cyclic phosphate + choline. The enzyme catalyses a 1-acyl-sn-glycero-3-phosphoethanolamine = a 1-acyl-sn-glycero-2,3-cyclic phosphate + ethanolamine. Dermonecrotic toxins cleave the phosphodiester linkage between the phosphate and headgroup of certain phospholipids (sphingolipid and lysolipid substrates), forming an alcohol (often choline) and a cyclic phosphate. This toxin acts on sphingomyelin (SM). It may also act on ceramide phosphoethanolamine (CPE), lysophosphatidylcholine (LPC) and lysophosphatidylethanolamine (LPE), but not on lysophosphatidylserine (LPS), and lysophosphatidylglycerol (LPG). It acts by transphosphatidylation, releasing exclusively cyclic phosphate products as second products. Induces dermonecrosis, hemolysis, increased vascular permeability, edema, inflammatory response, and platelet aggregation. The chain is Dermonecrotic toxin SpeSicTox-betaIIA1 from Sicarius peruensis (Six-eyed sand spider).